The sequence spans 217 residues: Uracil-DNA glycosylase (217 aa).

The active-site Proton acceptor is the D62.

It belongs to the uracil-DNA glycosylase (UDG) superfamily. UNG family.

It is found in the cytoplasm. The catalysed reaction is Hydrolyzes single-stranded DNA or mismatched double-stranded DNA and polynucleotides, releasing free uracil.. In terms of biological role, excises uracil residues from the DNA which can arise as a result of misincorporation of dUMP residues by DNA polymerase or due to deamination of cytosine. The protein is Uracil-DNA glycosylase of Streptococcus pyogenes serotype M1.